The following is a 201-amino-acid chain: Holliday junction branch migration complex subunit RuvA (201 aa).

A domain I region spans residues 1-63 (MYAYIKGKLS…EDAQLLYGFM (63 aa)). Residues 64 to 142 (SEEEKGMFLS…ITEENPETLL (79 aa)) form a domain II region. The flexible linker stretch occupies residues 143–153 (NFEGSESNQTS). The interval 153–201 (SPILDEALLALEALGYSKRELNKVEKKLQAESYTSVDEAVKAGLKILVS) is domain III.

Belongs to the RuvA family. As to quaternary structure, homotetramer. Forms an RuvA(8)-RuvB(12)-Holliday junction (HJ) complex. HJ DNA is sandwiched between 2 RuvA tetramers; dsDNA enters through RuvA and exits via RuvB. An RuvB hexamer assembles on each DNA strand where it exits the tetramer. Each RuvB hexamer is contacted by two RuvA subunits (via domain III) on 2 adjacent RuvB subunits; this complex drives branch migration. In the full resolvosome a probable DNA-RuvA(4)-RuvB(12)-RuvC(2) complex forms which resolves the HJ.

It localises to the cytoplasm. Its function is as follows. The RuvA-RuvB-RuvC complex processes Holliday junction (HJ) DNA during genetic recombination and DNA repair, while the RuvA-RuvB complex plays an important role in the rescue of blocked DNA replication forks via replication fork reversal (RFR). RuvA specifically binds to HJ cruciform DNA, conferring on it an open structure. The RuvB hexamer acts as an ATP-dependent pump, pulling dsDNA into and through the RuvAB complex. HJ branch migration allows RuvC to scan DNA until it finds its consensus sequence, where it cleaves and resolves the cruciform DNA. This chain is Holliday junction branch migration complex subunit RuvA, found in Staphylococcus carnosus (strain TM300).